The chain runs to 400 residues: ATP-dependent RNA helicase Ddx1 (400 aa).

Positions 1 to 60 (DDEADRLLKQGYTDLIERLHKQIPKITSDGCRLQMIVCSATLHAFEVKKMAERLMHFPTW) constitute a Helicase ATP-binding domain. Positions 2–5 (DEAD) match the DEAD box motif. Residues 115–316 (TFSQAVKLLK…QVVKSLDVPV (202 aa)) form the Helicase C-terminal domain.

This sequence belongs to the DEAD box helicase family. DDX1 subfamily.

It carries out the reaction ATP + H2O = ADP + phosphate + H(+). Its function is as follows. Acts as an ATP-dependent RNA helicase, able to unwind both RNA-RNA and RNA-DNA duplexes. Possesses 5' single-stranded RNA overhang nuclease activity. This Drosophila virilis (Fruit fly) protein is ATP-dependent RNA helicase Ddx1 (Ddx1).